The following is a 141-amino-acid chain: Putative pre-16S rRNA nuclease (141 aa).

The protein belongs to the YqgF nuclease family.

It is found in the cytoplasm. Its function is as follows. Could be a nuclease involved in processing of the 5'-end of pre-16S rRNA. In Histophilus somni (strain 129Pt) (Haemophilus somnus), this protein is Putative pre-16S rRNA nuclease.